A 653-amino-acid chain; its full sequence is Sodium-dependent phosphate transporter 2 (653 aa).

Residues 1-5 (MAIDG) are Extracellular-facing. The helical transmembrane segment at 6–26 (YLWMVILGFIIAFILAFSVGA) threads the bilayer. The Cytoplasmic segment spans residues 27 to 46 (NDVANSFGTAVGSGVVTLRQ). Residues 47–67 (ACILASIFETTGSVLLGAKVG) form a helical membrane-spanning segment. The Extracellular portion of the chain corresponds to 68 to 86 (ETIRKGIIDVNLYNETVET). The N-linked (GlcNAc...) asparagine glycan is linked to asparagine 81. A helical membrane pass occupies residues 87–107 (LMAGEVSAMVGSAVWQLIASF). Over 108 to 109 (LR) the chain is Cytoplasmic. Residues 110–130 (LPISGTHCIVGSTIGFSLVAI) traverse the membrane as a helical segment. The Extracellular segment spans residues 131 to 142 (GTQGVQWMELVK). The chain crosses the membrane as a helical span at residues 143–163 (IVASWFISPLLSGFMSGVLFI). The Cytoplasmic segment spans residues 164 to 190 (LIRIFILKKEDPVPNGLRALPVFYAAT). A helical transmembrane segment spans residues 191-211 (IAINVFSIMYTGAPVLGLVLP). Over 212 to 213 (IW) the chain is Extracellular. Residues 214-234 (AIALISFGVALLFALFVWLFV) traverse the membrane as a helical segment. Residues 235-483 (CPWMRRKIAG…EEKEEKDTAE (249 aa)) are Cytoplasmic-facing. Phosphoserine occurs at positions 253, 256, 259, and 268. The disordered stretch occupies residues 275–311 (PGAKANDDSTVPLTGSAGEPSGTSEGTSVGNHPRASY). Residues 295 to 304 (SGTSEGTSVG) are compositionally biased toward polar residues. Residues serine 316 and serine 385 each carry the phosphoserine modification. Residues 459 to 478 (SELTDPDQPRDDPAEEEKEE) form a disordered region. Residues 484 to 504 (VHLLFHFLQVLTACFGSFAHG) form a helical membrane-spanning segment. The Extracellular portion of the chain corresponds to 505–531 (GNDVSNAIGPLVALWLIYEQGAVLQEA). The helical transmembrane segment at 532-552 (VTPVWLLFYGGVGICTGLWVW) threads the bilayer. Topologically, residues 553–572 (GRRVIQTMGKDLTPITPSSG) are cytoplasmic. Residues 573-587 (FTIELASAFTVVIAS) form a helical membrane-spanning segment. The Extracellular portion of the chain corresponds to 588-594 (NVGLPVS). Residues 595–610 (TTHCKVGSVVAVGWIR) traverse the membrane as a helical segment. At 611–622 (SRKAVDWRLFRN) the chain is on the cytoplasmic side. The chain crosses the membrane as a helical span at residues 623–643 (IFVAWFVTVPVAGLFSAAIMA). Topologically, residues 644 to 653 (LLMYGILPYV) are extracellular.

It belongs to the inorganic phosphate transporter (PiT) (TC 2.A.20) family. In terms of assembly, homodimer.

It is found in the cell membrane. Its subcellular location is the apical cell membrane. It catalyses the reaction 2 Na(+)(out) + phosphate(out) = 2 Na(+)(in) + phosphate(in). Sodium-phosphate symporter which preferentially transports the monovalent form of phosphate with a stoichiometry of two sodium ions per phosphate ion. Plays a critical role in the determination of bone quality and strength by providing phosphate for bone mineralization. Required to maintain normal cerebrospinal fluid phosphate levels. Mediates phosphate-induced calcification of vascular smooth muscle cells (VCMCs) and can functionally compensate for loss of SLC20A1 in VCMCs. In terms of biological role, (Microbial infection) Functions as a retroviral receptor for feline leukemia virus subgroup B (FeLV-B). The chain is Sodium-dependent phosphate transporter 2 (SLC20A2) from Felis catus (Cat).